We begin with the raw amino-acid sequence, 711 residues long: Angiogenic factor with G patch and FHA domains 1 (711 aa).

Residues 1–19 show a composition bias toward pro residues; that stretch reads MASEAPSPPSPSPPPPASP. Disordered stretches follow at residues 1–23, 137–184, 260–297, and 311–400; these read MASEAPSPPSPSPPPPASPEPEL, ALDP…EGPA, PYQTSSTKPNRERRLKKRRKEPGFYTANEEKDLSSEDQ, and EHSG…EDEE. Alanine 2 bears the N-acetylalanine mark. Phosphoserine is present on residues serine 7 and serine 12. Positions 19 to 85 form a coiled coil; sequence PEPELAQLRR…SKILHCGKNE (67 aa). Residues 167–176 show a composition bias toward polar residues; the sequence is AVTSDSQESV. Residues 270 to 279 show a composition bias toward basic residues; the sequence is RERRLKKRRK. Basic and acidic residues predominate over residues 287 to 297; that stretch reads NEEKDLSSEDQ. Position 344 is a phosphoserine (serine 344). Acidic residues predominate over residues 361-370; that stretch reads SESEPEEGEI. Residues 374–391 are compositionally biased toward basic and acidic residues; it reads QSEKSYDGDSSSGDRETS. Positions 431 to 484 constitute an FHA domain; that stretch reads ATIGREKDMEHTVRIPEVAVSKFHAEVYFDHDLQSYVLVDQGSQNGTIVNGKQI. Composition is skewed to basic and acidic residues over residues 579–606 and 613–623; these read LKNPKYKDRAGKRREQVGSEGTFQRDDA and EITDSNKGRKM. A disordered region spans residues 579–623; it reads LKNPKYKDRAGKRREQVGSEGTFQRDDAPASVHSEITDSNKGRKM. Positions 616–662 constitute a G-patch domain; the sequence is DSNKGRKMLEKMGWKRGEGLGKDGGGMKTPIQLQLRRTHAGLGTGKL. At lysine 661 the chain carries N6-acetyllysine. Residues 690-699 are compositionally biased toward basic and acidic residues; the sequence is FTENKPRKET. A disordered region spans residues 690–711; it reads FTENKPRKETPGAVPWVTGTAE.

Interacts with the secreted angiogenic factor TNFSF12.

It is found in the cytoplasm. It localises to the secreted. Its function is as follows. Promotes angiogenesis and the proliferation of endothelial cells. Able to bind to endothelial cells and promote cell proliferation, suggesting that it may act in an autocrine fashion. This Mus musculus (Mouse) protein is Angiogenic factor with G patch and FHA domains 1 (Aggf1).